Here is a 253-residue protein sequence, read N- to C-terminus: Dihydroanticapsin 7-dehydrogenase (253 aa).

L9 to N31 is a binding site for NAD(+). S139 is a substrate binding site. Y152 acts as the Proton acceptor in catalysis.

This sequence belongs to the short-chain dehydrogenases/reductases (SDR) family.

The catalysed reaction is L-dihydroanticapsin + NAD(+) = L-anticapsin + NADH + H(+). It participates in antibiotic biosynthesis; bacilysin biosynthesis. Its function is as follows. Part of the bacABCDEFG operon responsible for the biosynthesis of bacilysin, an irreversible inactivator of the glutaminase domain of glucosamine synthetase. Catalyzes the dehydrogenation of the C7-hydroxyl group in the 4S-tetrahydrotyrosine (4S-H4Tyr) to yield anticapsin (epoxycyclohexanonyl-Ala). The sequence is that of Dihydroanticapsin 7-dehydrogenase from Bacillus subtilis.